Reading from the N-terminus, the 304-residue chain is Acetylglutamate kinase (304 aa).

Substrate contacts are provided by residues 82 to 83, Arg-104, and Asn-197; that span reads GG.

This sequence belongs to the acetylglutamate kinase family. ArgB subfamily.

Its subcellular location is the cytoplasm. It catalyses the reaction N-acetyl-L-glutamate + ATP = N-acetyl-L-glutamyl 5-phosphate + ADP. The protein operates within amino-acid biosynthesis; L-arginine biosynthesis; N(2)-acetyl-L-ornithine from L-glutamate: step 2/4. Functionally, catalyzes the ATP-dependent phosphorylation of N-acetyl-L-glutamate. This Prochlorococcus marinus (strain NATL1A) protein is Acetylglutamate kinase.